The following is a 551-amino-acid chain: MKIRHWSALSLFVLPALAQAEALTGEVHRQPLNIQAIVMFLLFVGGTLYITYWASKRTRSRQDYYTAGGRITGFQNGLAIAGDYMSAASFLGISALVYASGYDGLIYSIGFLIGWPIILFLIAERLRNLGRYTFADVASYRLQQRPIRTLSACGSLVVVALYLIAQMVGAGKLIQLLFGLNYHVAVVLVGILMVLYVLFGGMLATTWVQIIKAVMLLSGATFMAIMVMKSVNFNFNTLFSEAVKVHPKGLSIMSPGGLVSDPISALSLGLALMFGTAGLPHILMRFFTVSDAKEARKSVFYATGFIGYFYILTFIIGFGAILLVGPNQTFKDAAGALLGGNNMAAVHLANAVGGSFFLGFISAVAFATILAVVAGLTLAGASAVSHDLYASVIKKGKANERDELRVSKITVIILGIVAIGLGILFEKQNIAFMVGLAFSIAASCNFPIIIISMYWDKLTTRGAMIGGWLGLSTAVILMILGPTIWVTILGHEKPIYPYEYPALFSMIAAFVGTWFFSITDNSETGKQERLLFKSQFVRSQTGLGASKGGAH.

The next 14 membrane-spanning stretches (helical) occupy residues 5–25, 34–54, 77–97, 104–124, 150–170, 184–204, 207–227, 263–283, 304–324, 356–376, 406–426, 430–450, 469–489, and 498–518; these read HWSA…ALTG, IQAI…TYWA, GLAI…SALV, GLIY…LIAE, LSAC…MVGA, VAVV…GMLA, WVQI…AIMV, ISAL…PHIL, GFIG…ILLV, FFLG…VAGL, VSKI…ILFE, IAFM…PIII, LGLS…VTIL, and YEYP…FFSI.

It belongs to the sodium:solute symporter (SSF) (TC 2.A.21) family.

The protein localises to the cell inner membrane. Its function is as follows. Transports acetate. The polypeptide is Cation/acetate symporter ActP (Yersinia pseudotuberculosis serotype IB (strain PB1/+)).